A 465-amino-acid polypeptide reads, in one-letter code: Pancreatic triacylglycerol lipase (465 aa).

The first 16 residues, 1–16 (MLMLWTFAVLLGAVAG), serve as a signal peptide directing secretion. 2 cysteine pairs are disulfide-bonded: Cys-20/Cys-26 and Cys-107/Cys-118. Ser-169 (nucleophile) is an active-site residue. The Charge relay system role is filled by Asp-193. The Ca(2+) site is built by Glu-204, Arg-207, Asp-209, and Asp-212. Cys-254 and Cys-278 are disulfide-bonded. His-280 acts as the Charge relay system in catalysis. 3 disulfides stabilise this stretch: Cys-302-Cys-313, Cys-316-Cys-321, and Cys-449-Cys-465. In terms of domain architecture, PLAT spans 355–465 (WRYQVTVTLS…EDVLLTLSPC (111 aa)).

Belongs to the AB hydrolase superfamily. Lipase family. In terms of assembly, forms a 1:1 stoichiometric complex with (pro)colipase/CLPS. As to expression, pancreas.

It localises to the secreted. The enzyme catalyses a triacylglycerol + H2O = a diacylglycerol + a fatty acid + H(+). The catalysed reaction is 1,2,3-tri-(9Z-octadecenoyl)-glycerol + H2O = di-(9Z)-octadecenoylglycerol + (9Z)-octadecenoate + H(+). It carries out the reaction 1,2,3-tributanoylglycerol + H2O = dibutanoylglycerol + butanoate + H(+). It catalyses the reaction all-trans-retinyl hexadecanoate + H2O = all-trans-retinol + hexadecanoate + H(+). The enzyme catalyses 1,2-di-(9Z-octadecenoyl)-glycerol + H2O = (9Z-octadecenoyl)-glycerol + (9Z)-octadecenoate + H(+). With respect to regulation, inhibited by bile salts, is reactivated by (pro)colipase/CLPS. Functionally, plays an important role in fat metabolism. It preferentially splits the esters of long-chain fatty acids at positions 1 and 3, producing mainly 2-monoacylglycerol and free fatty acids, and shows considerably higher activity against insoluble emulsified substrates than against soluble ones. This is Pancreatic triacylglycerol lipase from Mus musculus (Mouse).